The chain runs to 104 residues: NADH-quinone oxidoreductase subunit K (104 aa).

The next 3 helical transmembrane spans lie at 4–24, 31–51, and 67–87; these read VPAS…LFGA, VIVL…FVAF, and LFTM…LIAL.

The protein belongs to the complex I subunit 4L family. In terms of assembly, NDH-1 is composed of 14 different subunits. Subunits NuoA, H, J, K, L, M, N constitute the membrane sector of the complex.

It localises to the cell membrane. It carries out the reaction a quinone + NADH + 5 H(+)(in) = a quinol + NAD(+) + 4 H(+)(out). In terms of biological role, NDH-1 shuttles electrons from NADH, via FMN and iron-sulfur (Fe-S) centers, to quinones in the respiratory chain. The immediate electron acceptor for the enzyme in this species is believed to be a menaquinone. Couples the redox reaction to proton translocation (for every two electrons transferred, four hydrogen ions are translocated across the cytoplasmic membrane), and thus conserves the redox energy in a proton gradient. This chain is NADH-quinone oxidoreductase subunit K, found in Bacillus anthracis (strain A0248).